A 387-amino-acid polypeptide reads, in one-letter code: Galactokinase (387 aa).

33–36 (EHTD) contributes to the substrate binding site. ATP contacts are provided by residues S67 and 123-129 (GAGLSSS). 2 residues coordinate Mg(2+): S129 and E161. D173 (proton acceptor) is an active-site residue. Y223 provides a ligand contact to substrate.

The protein belongs to the GHMP kinase family. GalK subfamily.

The protein localises to the cytoplasm. It catalyses the reaction alpha-D-galactose + ATP = alpha-D-galactose 1-phosphate + ADP + H(+). The protein operates within carbohydrate metabolism; galactose metabolism. In terms of biological role, catalyzes the transfer of the gamma-phosphate of ATP to D-galactose to form alpha-D-galactose-1-phosphate (Gal-1-P). The polypeptide is Galactokinase (Lacticaseibacillus casei (Lactobacillus casei)).